We begin with the raw amino-acid sequence, 1157 residues long: Zinc finger protein 516 (1157 aa).

Basic and acidic residues predominate over residues 1-13 (MDRSREAEMELRR). Residues 1-26 (MDRSREAEMELRRGPSPPRAGRSHEV) are disordered. Residues 1 to 420 (MDRSREAEME…ATRGKVAEPA (420 aa)) are mediates promoter DNA-binding and activation of transcription. 7 C2H2-type zinc fingers span residues 34–56 (HSCCICGKSFPFQSSLSQHMRKH), 62–84 (YKCPYCDHRASQKGNLKIHIRSH), 162–185 (VPCSFCKSRFERKKDLELHVHQAH), 188–211 (FKCRLCSYVTLREESLLSHIERDH), 236–258 (FPCEVCGQAFSQTWFLKAHMKKH), 264–286 (HGCHICGRRFKEPWFLKNHMKAH), and 323–345 (EVCTKCGNLFTNLDSLNAHNAIH). Positions 449–458 (SQEKRKREQD) are enriched in basic and acidic residues. Disordered regions lie at residues 449 to 503 (SQEK…QGKS) and 523 to 653 (SRVH…KGPE). Residues 494 to 503 (ASATTGQGKS) show a composition bias toward polar residues. Residues 504-526 (SECFECGKIFRTYHQMVLHSRVH) form a C2H2-type 8 zinc finger. Over residues 531 to 541 (RDRDPEGDRAA) the composition is skewed to basic and acidic residues. The segment covering 550–561 (EGDSASQPSSPG) has biased composition (polar residues). The segment covering 575-585 (EVVDDSGEEAV) has biased composition (acidic residues). A compositionally biased stretch (polar residues) spans 601-612 (GEVTPTALSNGD). Residue K630 forms a Glycyl lysine isopeptide (Lys-Gly) (interchain with G-Cter in SUMO2) linkage. Residues 644 to 653 (SSRETTKGPE) show a composition bias toward basic and acidic residues. Residue K669 forms a Glycyl lysine isopeptide (Lys-Gly) (interchain with G-Cter in SUMO2) linkage. The C2H2-type 9; atypical zinc finger occupies 753 to 776 (HPCPYCTHKTYYPEVLWMHKRIWH). Disordered regions lie at residues 831-996 (TQVP…EPSV) and 1013-1040 (RGEAALQAPPGAPPTLNSAKQEPAAEGQ). The span at 914-928 (GSGSLSRSTTPTPSV) shows a compositional bias: polar residues. Residues K1032 and K1051 each participate in a glycyl lysine isopeptide (Lys-Gly) (interchain with G-Cter in SUMO2) cross-link. The C2H2-type 10 zinc-finger motif lies at 1092-1114 (FVCVECGKSFHQPSQLRAHLRAH). The segment at 1123 to 1157 (PRDSEVHTASTDAPKQGRDHTTPGTVPAGPLRKGI) is disordered.

It belongs to the krueppel C2H2-type zinc-finger protein family. Interacts with PRDM16; the interaction is direct and may play a role in the transcription of brown adipose tissue-specific genes. Interacts with PWWP2B. Interacts with HDAC1; this interaction is enhanced in the presence of PWWP2B. As to expression, expressed by adipocytes more specifically in brown adipose tissue compared to white adipose tissue (WAT).

It localises to the nucleus. Transcriptional regulator that binds to the promoter and activates the transcription of genes promoting brown adipose tissue (BAT) differentiation. Among brown adipose tissue-specific genes, binds the proximal region of the promoter of the UCP1 gene to activate its transcription and thereby regulate thermogenesis. May also play a role in the cellular response to replication stress. This chain is Zinc finger protein 516, found in Mus musculus (Mouse).